Consider the following 440-residue polypeptide: D-serine dehydratase (440 aa).

An N6-(pyridoxal phosphate)lysine modification is found at lysine 116.

It belongs to the serine/threonine dehydratase family. DsdA subfamily. As to quaternary structure, monomer. Pyridoxal 5'-phosphate is required as a cofactor.

The enzyme catalyses D-serine = pyruvate + NH4(+). The protein is D-serine dehydratase of Salmonella typhimurium (strain LT2 / SGSC1412 / ATCC 700720).